Reading from the N-terminus, the 1693-residue chain is Putative stoned B-like protein (1693 aa).

The span at 1–12 shows a compositional bias: basic and acidic residues; that stretch reads MSWRDRDFDPHG. Disordered regions lie at residues 1-54, 222-322, 334-371, 383-438, 585-807, 841-869, and 899-1024; these read MSWR…ELPA, NQIP…VEKS, TVEITSPDAPHQGAFHDNTPKEPKVVEEEEDDDLPTFS, KEMT…DPNA, GDYH…TSAA, KKMEKLQKKKLKQQGKKAATPTLEPDEED, and PVKE…FVAD. Low complexity predominate over residues 26-39; that stretch reads SSSERAASMRAMRS. Composition is skewed to basic and acidic residues over residues 279–301 and 311–322; these read MEDKMEQAEEKARKEEKKEKEET and TTEKHQNEVEKS. Acidic residues predominate over residues 360 to 371; it reads EEEEDDDLPTFS. Over residues 393–412 the composition is skewed to basic and acidic residues; the sequence is ENVENEKQEDTHISEGHVEY. The segment covering 596–615 has biased composition (polar residues); it reads DENSTSAISGYEQNGASTSL. Low complexity predominate over residues 632-643; the sequence is YYQGQEYQQEYY. Positions 684-686 match the DPF 1 motif; sequence DPF. Residues 708–722 show a composition bias toward low complexity; sequence SPTPEASSSTGTSAP. Pro residues predominate over residues 745-760; it reads PPRPPPAARPPPPRPA. The segment covering 786–807 has biased composition (polar residues); it reads KVSTAVKSTESTLKNLEETSAA. Residues 899-913 show a composition bias toward basic and acidic residues; it reads PVKEIKKAPEIRRVD. Short sequence motifs (DPF) lie at residues 1006-1008, 1024-1026, and 1039-1041; these read DPF. Residues 1062–1095 are disordered; the sequence is ANAENEDDFYNGRQSPTLSTPTPEGGSPISQQRP. The span at 1073–1095 shows a compositional bias: polar residues; it reads GRQSPTLSTPTPEGGSPISQQRP. An SHD domain is found at 1136-1283; it reads GWDLMVRHPI…KCKITRTAKP (148 aa). Residues 1287–1606 enclose the MHD domain; that stretch reads QDEVQIHCYD…AKYQYKVEID (320 aa). Positions 1633-1693 are disordered; that stretch reads ELHQPTFNPS…IQIDMKNYGY (61 aa). Positions 1637-1651 are enriched in polar residues; sequence PTFNPSTQESDTQQG.

Belongs to the Stoned B family.

It is found in the cytoplasm. Functionally, potential adapter protein, which may be involved in endocytic vesicle recycling of synaptic vesicles. This is Putative stoned B-like protein (unc-41) from Caenorhabditis elegans.